The primary structure comprises 197 residues: Transcription factor FapR (197 aa).

The protein belongs to the FapR family.

Functionally, transcriptional factor involved in regulation of membrane lipid biosynthesis by repressing genes involved in fatty acid and phospholipid metabolism. The polypeptide is Transcription factor FapR (Bacillus cereus (strain 03BB102)).